A 900-amino-acid polypeptide reads, in one-letter code: Bifunctional uridylyltransferase/uridylyl-removing enzyme (900 aa).

Residues 1 to 342 (MPQVDPELFD…PCEQPVQIQP (342 aa)) form a uridylyltransferase region. A uridylyl-removing region spans residues 343 to 705 (LNSRFQLRDG…TTQREFESGS (363 aa)). One can recognise an HD domain in the interval 461–583 (VDAHTLNLIK…VGDQTHLDYL (123 aa)). ACT domains are found at residues 706-789 (QIFI…IIQR) and 816-891 (VLEV…DNGR).

It belongs to the GlnD family. It depends on Mg(2+) as a cofactor.

It carries out the reaction [protein-PII]-L-tyrosine + UTP = [protein-PII]-uridylyl-L-tyrosine + diphosphate. The enzyme catalyses [protein-PII]-uridylyl-L-tyrosine + H2O = [protein-PII]-L-tyrosine + UMP + H(+). Uridylyltransferase (UTase) activity is inhibited by glutamine, while glutamine activates uridylyl-removing (UR) activity. Modifies, by uridylylation and deuridylylation, the PII regulatory proteins (GlnB and homologs), in response to the nitrogen status of the cell that GlnD senses through the glutamine level. Under low glutamine levels, catalyzes the conversion of the PII proteins and UTP to PII-UMP and PPi, while under higher glutamine levels, GlnD hydrolyzes PII-UMP to PII and UMP (deuridylylation). Thus, controls uridylylation state and activity of the PII proteins, and plays an important role in the regulation of nitrogen assimilation and metabolism. In Pseudomonas aeruginosa (strain ATCC 15692 / DSM 22644 / CIP 104116 / JCM 14847 / LMG 12228 / 1C / PRS 101 / PAO1), this protein is Bifunctional uridylyltransferase/uridylyl-removing enzyme.